Reading from the N-terminus, the 921-residue chain is Translation initiation factor IF-2 (921 aa).

A disordered region spans residues 1 to 296 (MADQNTPGDK…PGPQKQRGRL (296 aa)). The span at 80–89 (RPSGPRPSGG) shows a compositional bias: low complexity. A compositionally biased stretch (basic and acidic residues) spans 117–183 (ARVRDLEERR…AKKRFGEGEA (67 aa)). 2 stretches are compositionally biased toward low complexity: residues 184-237 (PRPA…ARPA) and 248-257 (GRAPAAVAAG). Residues 417-586 (PRSPVVTVMG…MIALQADILD (170 aa)) form the tr-type G domain. The interval 426 to 433 (GHVDHGKT) is G1. Position 426-433 (426-433 (GHVDHGKT)) interacts with GTP. Residues 451–455 (GITQH) are G2. The interval 474 to 477 (DTPG) is G3. GTP-binding positions include 474 to 478 (DTPGH) and 528 to 531 (NKID). Residues 528–531 (NKID) are G4. Positions 564-566 (SAK) are G5.

The protein belongs to the TRAFAC class translation factor GTPase superfamily. Classic translation factor GTPase family. IF-2 subfamily.

Its subcellular location is the cytoplasm. Functionally, one of the essential components for the initiation of protein synthesis. Protects formylmethionyl-tRNA from spontaneous hydrolysis and promotes its binding to the 30S ribosomal subunits. Also involved in the hydrolysis of GTP during the formation of the 70S ribosomal complex. The chain is Translation initiation factor IF-2 from Bradyrhizobium sp. (strain ORS 278).